A 145-amino-acid chain; its full sequence is Probable inactive ribonuclease-like protein 12 (145 aa).

A signal peptide spans Met-1–Thr-19. Asn-88 carries N-linked (GlcNAc...) asparagine glycosylation.

The protein belongs to the pancreatic ribonuclease family.

The protein localises to the secreted. Functionally, does not exhibit any ribonuclease activity. The polypeptide is Probable inactive ribonuclease-like protein 12 (Rnase12) (Rattus norvegicus (Rat)).